A 314-amino-acid polypeptide reads, in one-letter code: 4-hydroxy-3-methylbut-2-enyl diphosphate reductase (314 aa).

C12 lines the [4Fe-4S] cluster pocket. The (2E)-4-hydroxy-3-methylbut-2-enyl diphosphate site is built by H43 and H81. Dimethylallyl diphosphate contacts are provided by H43 and H81. Positions 43 and 81 each coordinate isopentenyl diphosphate. A [4Fe-4S] cluster-binding site is contributed by C103. H131 lines the (2E)-4-hydroxy-3-methylbut-2-enyl diphosphate pocket. Dimethylallyl diphosphate is bound at residue H131. H131 is a binding site for isopentenyl diphosphate. E133 (proton donor) is an active-site residue. T170 contacts (2E)-4-hydroxy-3-methylbut-2-enyl diphosphate. Position 198 (C198) interacts with [4Fe-4S] cluster. (2E)-4-hydroxy-3-methylbut-2-enyl diphosphate is bound by residues S226, N228, and S271. Dimethylallyl diphosphate-binding residues include S226, N228, and S271. Positions 226, 228, and 271 each coordinate isopentenyl diphosphate.

Belongs to the IspH family. Requires [4Fe-4S] cluster as cofactor.

The enzyme catalyses isopentenyl diphosphate + 2 oxidized [2Fe-2S]-[ferredoxin] + H2O = (2E)-4-hydroxy-3-methylbut-2-enyl diphosphate + 2 reduced [2Fe-2S]-[ferredoxin] + 2 H(+). It carries out the reaction dimethylallyl diphosphate + 2 oxidized [2Fe-2S]-[ferredoxin] + H2O = (2E)-4-hydroxy-3-methylbut-2-enyl diphosphate + 2 reduced [2Fe-2S]-[ferredoxin] + 2 H(+). The protein operates within isoprenoid biosynthesis; dimethylallyl diphosphate biosynthesis; dimethylallyl diphosphate from (2E)-4-hydroxy-3-methylbutenyl diphosphate: step 1/1. It functions in the pathway isoprenoid biosynthesis; isopentenyl diphosphate biosynthesis via DXP pathway; isopentenyl diphosphate from 1-deoxy-D-xylulose 5-phosphate: step 6/6. In terms of biological role, catalyzes the conversion of 1-hydroxy-2-methyl-2-(E)-butenyl 4-diphosphate (HMBPP) into a mixture of isopentenyl diphosphate (IPP) and dimethylallyl diphosphate (DMAPP). Acts in the terminal step of the DOXP/MEP pathway for isoprenoid precursor biosynthesis. In Shouchella clausii (strain KSM-K16) (Alkalihalobacillus clausii), this protein is 4-hydroxy-3-methylbut-2-enyl diphosphate reductase.